A 138-amino-acid chain; its full sequence is Lutropin subunit beta (138 aa).

Residues 1-17 (LQGLLLWLLLSVGGVWA) form the signal peptide. 6 cysteine pairs are disulfide-bonded: C26-C74, C40-C89, C43-C127, C51-C105, C55-C107, and C110-C117. N-linked (GlcNAc...) asparagine glycosylation is present at N30.

This sequence belongs to the glycoprotein hormones subunit beta family. In terms of assembly, heterodimer of a common alpha chain and a unique beta chain which confers biological specificity to thyrotropin, lutropin, follitropin and gonadotropin.

It localises to the secreted. Functionally, promotes spermatogenesis and ovulation by stimulating the testes and ovaries to synthesize steroids. This Canis lupus familiaris (Dog) protein is Lutropin subunit beta (LHB).